Here is a 1771-residue protein sequence, read N- to C-terminus: Myosin-H heavy chain (1771 aa).

The region spanning 7–57 (CGKEKVWVPNPEKGWINGDLIKEIPGEGWLVRDENGKEIKIEKDELRMQNP) is the Myosin N-terminal SH3-like domain. The 780-residue stretch at 61–840 (EGIDDMTSLS…IIANLELLRS (780 aa)) folds into the Myosin motor domain. 154 to 161 (GESGAGKT) is a binding site for ATP. The segment at 690–712 (LNSLMTTINSTNPHYIRCIKPNT) is actin-binding. 3 IQ domains span residues 843-872 (MINSATFIQKIWRGYTDRKAYTSTKHSSIY), 866-895 (TKHSSIYFQSLIRSYLQQLEYNSMVEENSA), and 940-969 (RIKKIVKIQSLWRSNLAKKQLKLLKAEAKS). 3 disordered regions span residues 1070–1176 (EKQH…NNVD), 1218–1282 (VKKS…PINM), and 1312–1343 (LNNGTNPATSTTNGSGNPLSQSSPTGSDKHIQ). A compositionally biased stretch (polar residues) spans 1077–1111 (YKNNEVVGNTSFEGSTTTNNGVTSPPKSSPASPIR). Over residues 1112-1139 (NSINSNSDTTISGSSDDSIDNTDSLILS) the composition is skewed to low complexity. The span at 1143 to 1153 (HKGEDRKRNHE) shows a compositional bias: basic and acidic residues. Positions 1180–1224 (RRQFNELEKEYKELKQMDETHKQYIESLKLQITQLEEKVKKSSSH) form a coiled coil. The span at 1253 to 1281 (NSSSHHQQQQQQHNISPSNSITSTTSPIN) shows a compositional bias: low complexity. One can recognise a Dilute domain in the interval 1427–1695 (TGVLDPIETN…LTSLMDSPKY (269 aa)).

This sequence belongs to the TRAFAC class myosin-kinesin ATPase superfamily. Myosin family. As to quaternary structure, myosin I heavy chain is single-headed. Dimer of a heavy and a light chain. Inability to self-assemble into filaments.

Its function is as follows. Myosin is a protein that binds to actin and has ATPase activity that is activated by actin. This is Myosin-H heavy chain (myoH) from Dictyostelium discoideum (Social amoeba).